The chain runs to 660 residues: Bifunctional polymyxin resistance protein ArnA (660 aa).

The formyltransferase ArnAFT stretch occupies residues Met-1–Leu-304. Residue His-86–Ile-88 participates in (6R)-10-formyltetrahydrofolate binding. The active-site Proton donor; for formyltransferase activity is the His-104. Residues Arg-114 and Val-136 to Asp-140 each bind (6R)-10-formyltetrahydrofolate. The dehydrogenase ArnADH stretch occupies residues Arg-314–Ser-660. Residues Asp-347 and Asp-368 to Ile-369 each bind NAD(+). Residues Ala-393, Tyr-398, and Thr-432–Ser-433 contribute to the UDP-alpha-D-glucuronate site. The active-site Proton acceptor; for decarboxylase activity is Glu-434. Residues Arg-460, Asn-492, Lys-526 to Arg-535, and Tyr-613 each bind UDP-alpha-D-glucuronate. The active-site Proton donor; for decarboxylase activity is Arg-619.

It in the N-terminal section; belongs to the Fmt family. UDP-L-Ara4N formyltransferase subfamily. In the C-terminal section; belongs to the NAD(P)-dependent epimerase/dehydratase family. UDP-glucuronic acid decarboxylase subfamily. Homohexamer, formed by a dimer of trimers.

It catalyses the reaction UDP-alpha-D-glucuronate + NAD(+) = UDP-beta-L-threo-pentopyranos-4-ulose + CO2 + NADH. The catalysed reaction is UDP-4-amino-4-deoxy-beta-L-arabinose + (6R)-10-formyltetrahydrofolate = UDP-4-deoxy-4-formamido-beta-L-arabinose + (6S)-5,6,7,8-tetrahydrofolate + H(+). The protein operates within nucleotide-sugar biosynthesis; UDP-4-deoxy-4-formamido-beta-L-arabinose biosynthesis; UDP-4-deoxy-4-formamido-beta-L-arabinose from UDP-alpha-D-glucuronate: step 1/3. It participates in nucleotide-sugar biosynthesis; UDP-4-deoxy-4-formamido-beta-L-arabinose biosynthesis; UDP-4-deoxy-4-formamido-beta-L-arabinose from UDP-alpha-D-glucuronate: step 3/3. It functions in the pathway bacterial outer membrane biogenesis; lipopolysaccharide biosynthesis. Its function is as follows. Bifunctional enzyme that catalyzes the oxidative decarboxylation of UDP-glucuronic acid (UDP-GlcUA) to UDP-4-keto-arabinose (UDP-Ara4O) and the addition of a formyl group to UDP-4-amino-4-deoxy-L-arabinose (UDP-L-Ara4N) to form UDP-L-4-formamido-arabinose (UDP-L-Ara4FN). The modified arabinose is attached to lipid A and is required for resistance to polymyxin and cationic antimicrobial peptides. The protein is Bifunctional polymyxin resistance protein ArnA of Shigella flexneri serotype 5b (strain 8401).